The primary structure comprises 1479 residues: C-type mannose receptor 2 (1479 aa).

The N-terminal stretch at 1–30 (MVPIRPALAPWPRHLLRCVLLLGGLRLGHP) is a signal peptide. Residues 31–1413 (ADSAAALLEP…SAALPESPVA (1383 aa)) are Extracellular-facing. The region spanning 37-190 (LLEPDVFLIF…SHGKPCTIPF (154 aa)) is the Ricin B-type lectin domain. Cysteines 92 and 111 form a disulfide. N101 and N139 each carry an N-linked (GlcNAc...) asparagine glycan. The 49-residue stretch at 181 to 229 (SHGKPCTIPFKYDNQWFHGCTSTGREDGHLWCATTQDYGKDERWGFCPI) folds into the Fibronectin type-II domain. Intrachain disulfides connect C186–C212, C200–C227, C265–C358, and C334–C350. In terms of domain architecture, C-type lectin 1 spans 243-359 (LTDSCYQFNF…CSIALPYVCK (117 aa)). N363 carries N-linked (GlcNAc...) asparagine glycosylation. 7 C-type lectin domains span residues 388–504 (FQGH…SICK), 527–643 (HSPS…RYIC), 677–808 (KLRH…WICK), 831–950 (FQEA…YICK), 978–1106 (FLNK…GFIC), 1131–1242 (YLNH…GAVC), and 1271–1391 (FREH…GVVC). 7 disulfides stabilise this stretch: C409–C503, C480–C495, C617–C634, C703–C807, C784–C799, C852–C949, and C926–C941. An N-linked (GlcNAc...) asparagine glycan is attached at N1028. A disulfide bond links C1077 and C1097. K1141 is covalently cross-linked (Glycyl lysine isopeptide (Lys-Gly) (interchain with G-Cter in SUMO1)). C1219 and C1233 form a disulfide bridge. N1348 is a glycosylation site (N-linked (GlcNAc...) asparagine). C1367 and C1382 are oxidised to a cystine. A helical membrane pass occupies residues 1414–1434 (LVVVLTAVLLLLALMTAALIL). Topologically, residues 1435-1479 (YRRRQSAERGSFEGARYSRSSHSGPAEATEKNILVSDMEMNEQQE) are cytoplasmic. The interval 1446 to 1479 (FEGARYSRSSHSGPAEATEKNILVSDMEMNEQQE) is disordered.

Interacts directly with PLAUR/UPAR and PLAU/pro-UPA to form a tri-molecular complex. Interacts with collagen V and with C-terminal region of type I collagen/COL1A1. Post-translationally, phosphorylated. In terms of tissue distribution, highly expressed in heart, lung and kidney, but little or no expression in brain, thymus or adult liver. Expressed at highly endothelialized sites such as those in choroid plexus and kidney glomerulai as well as in chondrocytes in cartilaginous regions of the embryo.

Its subcellular location is the membrane. May play a role as endocytotic lectin receptor displaying calcium-dependent lectin activity. Internalizes glycosylated ligands from the extracellular space for release in an endosomal compartment via clathrin-mediated endocytosis. May be involved in plasminogen activation system controlling the extracellular level of PLAUR/PLAU, and thus may regulate protease activity at the cell surface. May contribute to cellular uptake, remodeling and degradation of extracellular collagen matrices. May participate in remodeling of extracellular matrix cooperating with the matrix metalloproteinases (MMPs). This Mus musculus (Mouse) protein is C-type mannose receptor 2 (Mrc2).